The chain runs to 227 residues: MGNCVKSPLRNLSRKMRQEEKTSYMAVQTSEDGLADGGELHGPLMMLAQNCAVMHNLLGPACIFLRKGFAENRQPDRSLRPEEIEELREAFREFDKDKDGYINCRDLGNCMRTMGYMPTEMELIELSQQINMNLGGHVDFDDFVELMGPKLLAETADMIGVKELRDAFREFDTNGDGEISTSELREAMRKLLGHQVGHRDIEEIIRDVDLNGDGRVDFEEFVRMMSR.

Residue glycine 2 is the site of N-myristoyl glycine attachment. Cysteine 4 is lipidated: S-palmitoyl cysteine. 4 consecutive EF-hand domains span residues 82 to 117, 136 to 153, 159 to 194, and 196 to 227; these read EEIE…MGYM, GHVD…KLLA, IGVK…LLGH, and VGHR…MMSR. Ca(2+) contacts are provided by aspartate 95, aspartate 97, aspartate 99, tyrosine 101, and aspartate 106. Residues aspartate 172, asparagine 174, aspartate 176, and glutamate 178 each contribute to the Ca(2+) site. Serine 180 carries the phosphoserine modification. Ca(2+) is bound by residues glutamate 183, aspartate 209, asparagine 211, aspartate 213, arginine 215, and glutamate 220.

As to quaternary structure, homodimer; when bound to calcium or magnesium. Interacts (via C-terminus) with ITPR1, ITPR2 and ITPR3. This binding is calcium dependent and the interaction correlates with calcium concentration. An additional calcium-independent interaction with the N-terminus of ITPR1 results in a decreased InsP(3) binding to the receptor. Interacts with CACNA1A (via C-terminal CDB motif) in the pre- and postsynaptic membranes. Interacts with CACNA1D and CACNA1C (via C-terminal C and IQ motifs). The binding to the C motif is calcium independent whereas the binding to IQ requires the presence of calcium and is mutually exclusive with calmodulin binding. Interacts with TRPC5 (via C-terminus). Interacts (via EF-hands 1 and 2) at microtubules with MAP1LC3B. Interacts with MYO1C. Interacts (via EF-hands 1 and 2) with NSMF (via the central NLS-containing motif region), the interaction occurs in a calcium dependent manner after synaptic NMDA receptor stimulation and prevents nuclear import of NSMF. Interacts with SPACA9 homolog. Post-translationally, phosphorylated. The phosphorylation regulates the activity. In terms of tissue distribution, expressed in the inner retina, specifically in amacrine cells and in cone OFF-bipolar cells (at protein level).

In terms of biological role, modulates calcium-dependent activity of inositol 1,4,5-triphosphate receptors (ITPRs). Inhibits agonist-induced intracellular calcium signaling. Enhances inactivation and does not support calcium-dependent facilitation of voltage-dependent P/Q-type calcium channels. Causes calcium-dependent facilitation and inhibits inactivation of L-type calcium channels by binding to the same sites as calmodulin in the C-terminal domain of CACNA1C, but has an opposite effect on channel function. Suppresses the calcium-dependent inactivation of CACNA1D. Inhibits TRPC5 channels. Prevents NMDA receptor-induced cellular degeneration. Required for the normal transfer of light signals through the retina. In Mus musculus (Mouse), this protein is Calcium-binding protein 1 (Cabp1).